Here is a 184-residue protein sequence, read N- to C-terminus: Bcl-2-modifying factor (184 aa).

The tract at residues 67–75 (DKATQTLSP) is interaction with DLC2. A BH3 motif is present at residues 133 to 147 (IARKLQCIADQFHRL).

Belongs to the Bcl-2 family. As to quaternary structure, interacts with MCL1, BCL2, BCL2L1/BCL-Xl, BCL2A1 and BCL2L2/BCL-w. Interacts with the myosin V actin motor complex through its binding to DLC2. Isoform 1 is mainly expressed in B-lymphoid cells. Isoform 2 and isoform 3 are mainly expressed in B-CLL and normal B-cells.

Functionally, may play a role in apoptosis. Isoform 1 seems to be the main initiator. In Homo sapiens (Human), this protein is Bcl-2-modifying factor (BMF).